Reading from the N-terminus, the 30-residue chain is Cyclotide mden-G (30 aa).

A cross-link (cyclopeptide (Gly-Asn)) is located at residues glycine 1 to asparagine 30. 3 disulfides stabilise this stretch: cysteine 4–cysteine 20, cysteine 8–cysteine 22, and cysteine 13–cysteine 27.

This sequence belongs to the cyclotide family. Bracelet subfamily. Post-translationally, this is a cyclic peptide.

Its function is as follows. Probably participates in a plant defense mechanism. This is Cyclotide mden-G from Melicytus dentatus (Tree violet).